Reading from the N-terminus, the 187-residue chain is ATP synthase subunit b (187 aa).

The chain crosses the membrane as a helical span at residues 31–51; that stretch reads VAIMGLAIFVLFLILSYLLFN.

Belongs to the ATPase B chain family. In terms of assembly, F-type ATPases have 2 components, F(1) - the catalytic core - and F(0) - the membrane proton channel. F(1) has five subunits: alpha(3), beta(3), gamma(1), delta(1), epsilon(1). F(0) has three main subunits: a(1), b(2) and c(10-14). The alpha and beta chains form an alternating ring which encloses part of the gamma chain. F(1) is attached to F(0) by a central stalk formed by the gamma and epsilon chains, while a peripheral stalk is formed by the delta and b chains.

The protein localises to the cell membrane. Its function is as follows. F(1)F(0) ATP synthase produces ATP from ADP in the presence of a proton or sodium gradient. F-type ATPases consist of two structural domains, F(1) containing the extramembraneous catalytic core and F(0) containing the membrane proton channel, linked together by a central stalk and a peripheral stalk. During catalysis, ATP synthesis in the catalytic domain of F(1) is coupled via a rotary mechanism of the central stalk subunits to proton translocation. Component of the F(0) channel, it forms part of the peripheral stalk, linking F(1) to F(0). The protein is ATP synthase subunit b of Lachnoclostridium phytofermentans (strain ATCC 700394 / DSM 18823 / ISDg) (Clostridium phytofermentans).